The following is a 270-amino-acid chain: MQSKLLLSTKLTSQGKTQLDQYFVSPPFKVMTLPAYDDAWQNGLNAMQMSSSPGLLAGDLLDIEISLADNTALSLNTQAFTRVQSMNEGDYATQKTCIKLGKNSRLFYLPHPLVLHKDSGFKQTTEIEMSEQSELIYGEIVAIGRVLNGERFAFRHFASYLRISYQNQPLVTDRIQWLPAKMALTSLSQMEDFSHQGSLTYVNLAKNAVEIKAMVSELQALAAEQKNMLIGVSQLNEGGLMVRVLAHRADIIQHLFERIGQVLKAQSNIV.

It belongs to the UreD family. In terms of assembly, ureD, UreF and UreG form a complex that acts as a GTP-hydrolysis-dependent molecular chaperone, activating the urease apoprotein by helping to assemble the nickel containing metallocenter of UreC. The UreE protein probably delivers the nickel.

Its subcellular location is the cytoplasm. In terms of biological role, required for maturation of urease via the functional incorporation of the urease nickel metallocenter. The polypeptide is Urease accessory protein UreD (Actinobacillus pleuropneumoniae serotype 5b (strain L20)).